Here is a 549-residue protein sequence, read N- to C-terminus: Chaperonin GroEL (549 aa).

Residues 30–33 (TLGP), Lys-51, 87–91 (DGTTT), Gly-415, 479–481 (NAA), and Asp-495 each bind ATP.

It belongs to the chaperonin (HSP60) family. In terms of assembly, forms a cylinder of 14 subunits composed of two heptameric rings stacked back-to-back. Interacts with the co-chaperonin GroES.

It localises to the cytoplasm. The catalysed reaction is ATP + H2O + a folded polypeptide = ADP + phosphate + an unfolded polypeptide.. Together with its co-chaperonin GroES, plays an essential role in assisting protein folding. The GroEL-GroES system forms a nano-cage that allows encapsulation of the non-native substrate proteins and provides a physical environment optimized to promote and accelerate protein folding. This Leptothrix cholodnii (strain ATCC 51168 / LMG 8142 / SP-6) (Leptothrix discophora (strain SP-6)) protein is Chaperonin GroEL.